The chain runs to 312 residues: MTIKRKKVSVIGAGFTGATTAFLLAQKELADVVLVDIPQLENPTKGKALDMLEASPVQGFDANIIGTSDYADTADSDVVVITAGIARKPGMSRDDLVATNSKIMKSITRDIAKHSPNAIIVVLTNPVDAMTYSVFKEAGFPKERVIGQSGVLDTARFRTFIAQELNLSVKDITGFVLGGHGDDMVPLVRYSYAGGIPLETLIPKERLEAIVERTRKGGGEIVGLLGNGSAYYAPAASLVEMTEAILKDQRRILPAIAYLEGEYGYSDLYLGVPVILGGNGIEKIIELELLADEKEALDRSVESVRNVMKVLV.

Residues 12–17 (GAGFTG) and aspartate 36 contribute to the NAD(+) site. Residues arginine 87 and arginine 93 each coordinate substrate. Residues asparagine 100 and 123–125 (LTN) contribute to the NAD(+) site. Residue asparagine 125 participates in substrate binding. Serine 149 is modified (phosphoserine). Arginine 156 is a substrate binding site. Histidine 180 functions as the Proton acceptor in the catalytic mechanism.

Belongs to the LDH/MDH superfamily. MDH type 3 family.

It carries out the reaction (S)-malate + NAD(+) = oxaloacetate + NADH + H(+). In terms of biological role, catalyzes the reversible oxidation of malate to oxaloacetate. The chain is Malate dehydrogenase from Bacillus cereus (strain ATCC 14579 / DSM 31 / CCUG 7414 / JCM 2152 / NBRC 15305 / NCIMB 9373 / NCTC 2599 / NRRL B-3711).